A 195-amino-acid chain; its full sequence is NADH-quinone oxidoreductase subunit I (195 aa).

2 4Fe-4S ferredoxin-type domains span residues 44 to 74 and 90 to 119; these read LNRY…VEGA and QVYQ…MTNE. [4Fe-4S] cluster contacts are provided by Cys54, Cys57, Cys60, Cys64, Cys99, Cys102, Cys105, and Cys109. Residues 145–195 are disordered; it reads MTAPPHALRPGTTQDDYYRGDITAVPEQAAPEQAAPEQPAPEREPNPETEK. Residues 168–181 are compositionally biased toward low complexity; sequence AVPEQAAPEQAAPE. Residues 184 to 195 show a composition bias toward basic and acidic residues; the sequence is APEREPNPETEK.

It belongs to the complex I 23 kDa subunit family. In terms of assembly, NDH-1 is composed of 14 different subunits. Subunits NuoA, H, J, K, L, M, N constitute the membrane sector of the complex. [4Fe-4S] cluster is required as a cofactor.

The protein resides in the cell membrane. The catalysed reaction is a quinone + NADH + 5 H(+)(in) = a quinol + NAD(+) + 4 H(+)(out). Its function is as follows. NDH-1 shuttles electrons from NADH, via FMN and iron-sulfur (Fe-S) centers, to quinones in the respiratory chain. The immediate electron acceptor for the enzyme in this species is believed to be ubiquinone. Couples the redox reaction to proton translocation (for every two electrons transferred, four hydrogen ions are translocated across the cytoplasmic membrane), and thus conserves the redox energy in a proton gradient. This is NADH-quinone oxidoreductase subunit I from Rhodococcus erythropolis (strain PR4 / NBRC 100887).